A 261-amino-acid polypeptide reads, in one-letter code: GTP cyclohydrolase FolE2 (261 aa).

Belongs to the GTP cyclohydrolase IV family.

The enzyme catalyses GTP + H2O = 7,8-dihydroneopterin 3'-triphosphate + formate + H(+). It functions in the pathway cofactor biosynthesis; 7,8-dihydroneopterin triphosphate biosynthesis; 7,8-dihydroneopterin triphosphate from GTP: step 1/1. Functionally, converts GTP to 7,8-dihydroneopterin triphosphate. This chain is GTP cyclohydrolase FolE2, found in Fervidobacterium nodosum (strain ATCC 35602 / DSM 5306 / Rt17-B1).